Here is an 885-residue protein sequence, read N- to C-terminus: Protein PTHB1 (885 aa).

The tract at residues 1–406 (MSLFKARDWW…LQGVWPLTEQ (406 aa)) is seven-bladed beta-propeller. The tract at residues 684–764 (RDKTPAPLQH…FLPLQEDTQE (81 aa)) is interaction with LZTL1.

As to quaternary structure, part of BBSome complex, that contains BBS1, BBS2, BBS4, BBS5, BBS7, BBS8/TTC8, BBS9 and BBIP10. Interacts with LZTL1; the interaction mediates the association of LZTL1 with the BBsome complex and regulates BBSome ciliary trafficking.

The protein resides in the cell projection. Its subcellular location is the cilium membrane. The protein localises to the cytoplasm. It is found in the cytoskeleton. It localises to the microtubule organizing center. The protein resides in the centrosome. Its subcellular location is the centriolar satellite. In terms of biological role, the BBSome complex is thought to function as a coat complex required for sorting of specific membrane proteins to the primary cilia. The BBSome complex is required for ciliogenesis but is dispensable for centriolar satellite function. This ciliogenic function is mediated in part by the Rab8 GDP/GTP exchange factor, which localizes to the basal body and contacts the BBSome. Rab8(GTP) enters the primary cilium and promotes extension of the ciliary membrane. Firstly the BBSome associates with the ciliary membrane and binds to RAB3IP/Rabin8, the guanosyl exchange factor (GEF) for Rab8 and then the Rab8-GTP localizes to the cilium and promotes docking and fusion of carrier vesicles to the base of the ciliary membrane. Required for proper BBSome complex assembly and its ciliary localization. In Mus musculus (Mouse), this protein is Protein PTHB1 (Bbs9).